A 271-amino-acid polypeptide reads, in one-letter code: Phosphatidylinositol transfer protein alpha isoform (271 aa).

The a 1,2-diacyl-sn-glycero-3-phospho-(1D-myo-inositol) site is built by Thr-59, Lys-61, Glu-86, Asn-90, Thr-97, and Lys-195. Lys-216 is modified (N6-acetyllysine). The segment covering 251-264 has biased composition (basic and acidic residues); that stretch reads TKRQLDEMRQKDPV. The segment at 251 to 271 is disordered; the sequence is TKRQLDEMRQKDPVKGMTADD.

This sequence belongs to the PtdIns transfer protein family. PI transfer class I subfamily. In terms of processing, phosphorylated by PKC in a calcium and phosphatidylserine-dependent manner. Expressed in a wide range of tissues.

The protein resides in the cytoplasm. It is found in the nucleus. The enzyme catalyses a 1,2-diacyl-sn-glycero-3-phosphocholine(in) = a 1,2-diacyl-sn-glycero-3-phosphocholine(out). The catalysed reaction is a 1,2-diacyl-sn-glycero-3-phospho-(1D-myo-inositol)(in) = a 1,2-diacyl-sn-glycero-3-phospho-(1D-myo-inositol)(out). With respect to regulation, phosphatidylinositol transfer activity is inhibited by N-ethylmaleimide. In terms of biological role, catalyzes the transfer of phosphatidylinositol (PI) and phosphatidylcholine (PC) between membranes. Shows a preference for PI and PC containing shorter saturated or monosaturated acyl chains at the sn-1 and sn-2 positions. Preference order for PC is C16:1 &gt; C16:0 &gt; C18:1 &gt; C18:0 &gt; C20:4 and for PI is C16:1 &gt; C16:0 &gt; C18:1 &gt; C18:0 &gt; C20:4 &gt; C20:3. The sequence is that of Phosphatidylinositol transfer protein alpha isoform (Pitpna) from Rattus norvegicus (Rat).